The chain runs to 245 residues: Ribonuclease PH (245 aa).

Phosphate contacts are provided by residues Arg-87 and 125 to 127 (GTR).

Belongs to the RNase PH family. As to quaternary structure, homohexameric ring arranged as a trimer of dimers.

The catalysed reaction is tRNA(n+1) + phosphate = tRNA(n) + a ribonucleoside 5'-diphosphate. Its function is as follows. Phosphorolytic 3'-5' exoribonuclease that plays an important role in tRNA 3'-end maturation. Removes nucleotide residues following the 3'-CCA terminus of tRNAs; can also add nucleotides to the ends of RNA molecules by using nucleoside diphosphates as substrates, but this may not be physiologically important. Probably plays a role in initiation of 16S rRNA degradation (leading to ribosome degradation) during starvation. This chain is Ribonuclease PH, found in Streptomyces coelicolor (strain ATCC BAA-471 / A3(2) / M145).